The following is a 316-amino-acid chain: MKVLWAALVVTLLAGCGADVEPGPEVQPGPEVQLGKEWATWQASQPWEQALGRFWNYLRWVQTLSEKVQEQLLSSQVTEELTALMDDTMKEVKACKSELEEQLGPVTEETKARVSKELQAAQARLGADMEEVRSRLAQYRGELQAMVGQSTEELRGRLSAHLRKLRKRLLRDAEDLQRRLAVYQAGIREGAARSVNTLREHLGPLAEQAATVHTLVSKPLQERAEAWAQRLRGRLEKAGFPVGDRLDEVREQVQEVRAKVEEQANQVRLQAEAFQGRLKSWFEPLVQDMQQKWAELVEKVQLAVGAVPTSVPSEKQ.

Positions 1-18 are cleaved as a signal peptide; that stretch reads MKVLWAALVVTLLAGCGA. A run of 8 repeats spans residues 83–104, 105–126, 127–148, 149–170, 171–192, 193–214, 215–232, and 233–254. The tract at residues 83–254 is 8 X 22 AA approximate tandem repeats; sequence ALMDDTMKEV…RLDEVREQVQ (172 aa). An LDL and other lipoprotein receptors binding region spans residues 161 to 171; the sequence is HLRKLRKRLLR. 165-168 provides a ligand contact to heparin; it reads LRKR. Residues 213-289 are lipid-binding and lipoprotein association; that stretch reads HTLVSKPLQE…SWFEPLVQDM (77 aa). Heparin is bound at residue 228-235; the sequence is AQRLRGRL. Residues 265–316 are homooligomerization; sequence NQVRLQAEAFQGRLKSWFEPLVQDMQQKWAELVEKVQLAVGAVPTSVPSEKQ. A specificity for association with VLDL region spans residues 277 to 289; sequence RLKSWFEPLVQDM.

It belongs to the apolipoprotein A1/A4/E family. Homotetramer. May interact with ABCA1; functionally associated with ABCA1 in the biogenesis of HDLs. May interact with APP/A4 amyloid-beta peptide; the interaction is extremely stable in vitro but its physiological significance is unclear. May interact with MAPT. May interact with MAP2. In the cerebrospinal fluid, interacts with secreted SORL1. Interacts with PMEL; this allows the loading of PMEL luminal fragment on ILVs to induce fibril nucleation. APOE exists as multiple glycosylated and sialylated glycoforms within cells and in plasma. The extent of glycosylation and sialylation are tissue and context specific. Post-translationally, glycated in plasma VLDL. In terms of processing, phosphorylated by FAM20C in the extracellular medium.

It is found in the secreted. The protein resides in the extracellular space. It localises to the extracellular matrix. The protein localises to the extracellular vesicle. Its subcellular location is the endosome. It is found in the multivesicular body. Its function is as follows. APOE is an apolipoprotein, a protein associating with lipid particles, that mainly functions in lipoprotein-mediated lipid transport between organs via the plasma and interstitial fluids. APOE is a core component of plasma lipoproteins and is involved in their production, conversion and clearance. Apolipoproteins are amphipathic molecules that interact both with lipids of the lipoprotein particle core and the aqueous environment of the plasma. As such, APOE associates with chylomicrons, chylomicron remnants, very low density lipoproteins (VLDL) and intermediate density lipoproteins (IDL) but shows a preferential binding to high-density lipoproteins (HDL). It also binds a wide range of cellular receptors including the LDL receptor/LDLR and the very low-density lipoprotein receptor/VLDLR that mediate the cellular uptake of the APOE-containing lipoprotein particles. Finally, APOE also has a heparin-binding activity and binds heparan-sulfate proteoglycans on the surface of cells, a property that supports the capture and the receptor-mediated uptake of APOE-containing lipoproteins by cells. This is Apolipoprotein E (APOE) from Diceros bicornis (Black rhinoceros).